The sequence spans 373 residues: UDP-glucose 4-epimerase 3 (373 aa).

27-58 (SVLVTGGAGYIGTHTVLRLLEKGFAVTVVDNF) is an NAD(+) binding site. Ser-153 provides a ligand contact to substrate. Residue Tyr-177 is the Proton acceptor of the active site.

Belongs to the NAD(P)-dependent epimerase/dehydratase family. NAD(+) is required as a cofactor.

It catalyses the reaction UDP-alpha-D-glucose = UDP-alpha-D-galactose. Its pathway is carbohydrate metabolism; galactose metabolism. Its function is as follows. Catalyzes the interconversion between UDP-glucose and UDP-galactose. This is UDP-glucose 4-epimerase 3 (UGE-3) from Oryza sativa subsp. japonica (Rice).